We begin with the raw amino-acid sequence, 358 residues long: Peptide chain release factor 1 (358 aa).

At Gln-233 the chain carries N5-methylglutamine.

It belongs to the prokaryotic/mitochondrial release factor family. Post-translationally, methylated by PrmC. Methylation increases the termination efficiency of RF1.

The protein resides in the cytoplasm. Its function is as follows. Peptide chain release factor 1 directs the termination of translation in response to the peptide chain termination codons UAG and UAA. This is Peptide chain release factor 1 from Clostridium botulinum (strain 657 / Type Ba4).